The following is a 1358-amino-acid chain: Phosphoinositide 3-kinase regulatory subunit 4 (1358 aa).

A lipid anchor (N-myristoyl glycine) is attached at G2. A Protein kinase domain is found at 26–324 (FEYDKSLGST…AFPEIFYTFL (299 aa)). Residues 32–40 (LGSTRFFKV) and K53 each bind ATP. D148 (proton acceptor) is an active-site residue. HEAT repeat units follow at residues 373–411 (NGLVILVSVITSCLQTLKYYDSKLAALELILHLAPRLGV), 413–450 (ILLDRITPYLLHFSNDSVPRVRAEALRTLTKVLALVKE), 458–495 (IYPEYILPGIAHLAQDDATIVRLAYAENIALLAETALR), 531–570 (QALHEMVQQKVVTLLSDPENIVKQTLMENGITRLCVFFGR), 572–610 (KANDVLLSHMITFLNDKNDWHLRGAFFDSIVGVAAYVGW), 612–648 (SSSILKPLLQQGLSDAEEFVIVKALYALTCMCQLGLL), and 690–726 (DVYCKLMPYLDPYITQPIIQIERKLVLLSVLKEPVSR). Phosphoserine is present on residues S808, S813, S853, and S865. A disordered region spans residues 875-899 (LPKGSDQEVIQTGKPPRSESSAGIC). 6 WD repeats span residues 991–1030 (EHKSAVNRIRVSDEHSLFATCSNDGTVKIRNSQKMEGKTT), 1040–1079 (RVGGRVKTLTFCQGSHYLAIASDNGAVQLLGIEASKLPKS), 1093–1134 (KEDG…NAWT), 1139–1178 (LKSGLITSFAVDIHQCWLCIGTSSGTMACWDMRFQLPISS), 1182–1223 (PSRA…RRFT), and 1237–1278 (PSPH…RSYV). The disordered stretch occupies residues 1307–1326 (KQKVGPSDDTPRRGPESLPV). Residues 1315-1326 (DTPRRGPESLPV) show a composition bias toward basic and acidic residues. Position 1316 is a phosphothreonine (T1316). The stretch at 1327 to 1358 (GHHDIITDVATFQTTQGFIVTASRDGIVKVWK) is one WD 7 repeat.

Belongs to the protein kinase superfamily. Ser/Thr protein kinase family. Component of the PI3K (PI3KC3/PI3K-III/class III phosphatidylinositol 3-kinase) complex the core of which is composed of the catalytic subunit PIK3C3, the regulatory subunit PIK3R4 and BECN1 associating with additional regulatory/auxiliary subunits to form alternative complex forms. Alternative complex forms containing a fourth regulatory subunit in a mutually exclusive manner are PI3K complex I (PI3KC3-C1) containing ATG14, and PI3K complex II (PI3KC3-C2) containing UVRAG. PI3KC3-C1 displays a V-shaped architecture with PIK3R4 serving as a bridge between PIK3C3 and the ATG14:BECN1 subcomplex. Both, PI3KC3-C1 and PI3KC3-C2, can associate with further regulatory subunits, such as RUBCN, SH3GLB1/Bif-1, AMBRA1 and NRBF2. PI3KC3-C1 probably associates with PIK3CB. Interacts with RAB7A in the presence of PIK3C3/VPS34. Interacts with NRBF2. Interacts with ARMC3. Mn(2+) is required as a cofactor. In terms of processing, myristoylated. Probably autophosphorylated.

The protein localises to the late endosome. Its subcellular location is the cytoplasmic vesicle. It localises to the autophagosome. The protein resides in the membrane. It carries out the reaction L-seryl-[protein] + ATP = O-phospho-L-seryl-[protein] + ADP + H(+). The enzyme catalyses L-threonyl-[protein] + ATP = O-phospho-L-threonyl-[protein] + ADP + H(+). Its function is as follows. Regulatory subunit of the PI3K complex that mediates formation of phosphatidylinositol 3-phosphate; different complex forms are believed to play a role in multiple membrane trafficking pathways: PI3KC3-C1 is involved in initiation of autophagosomes and PI3KC3-C2 in maturation of autophagosomes and endocytosis. Involved in regulation of degradative endocytic trafficking and cytokinesis, probably in the context of PI3KC3-C2. Functionally, regulatory subunit of the PI3K complex. May regulate membrane trafficking late in the endocytic pathway. The protein is Phosphoinositide 3-kinase regulatory subunit 4 (PIK3R4) of Pongo abelii (Sumatran orangutan).